The chain runs to 665 residues: Pre-mRNA-processing factor 39 (665 aa).

Over residues 1 to 11 (MQNSHMEEYRN) the composition is skewed to basic and acidic residues. A disordered region spans residues 1–28 (MQNSHMEEYRNSDNGSTGNSSEVAVVEH). Residues 12–22 (SDNGSTGNSSE) show a composition bias toward polar residues. Serine 44 is modified (phosphoserine). HAT repeat units follow at residues 107–139 (NHLM…LEKR), 141–173 (DNIK…FLKE), 181–216 (ETNT…WENE), 218–251 (GNLR…HVQN), 331–363 (FEEG…FEIE), 365–397 (GTHE…YMEN), and 402–434 (GVRH…QQGN). A compositionally biased stretch (basic and acidic residues) spans 599 to 622 (QDTLKRKAENGSEEPEEKKAHTED). Residues 599-625 (QDTLKRKAENGSEEPEEKKAHTEDLSS) are disordered.

The protein belongs to the PRP39 family.

Its subcellular location is the nucleus. Functionally, involved in pre-mRNA splicing. This is Pre-mRNA-processing factor 39 (Prpf39) from Mus musculus (Mouse).